Here is a 213-residue protein sequence, read N- to C-terminus: Small ribosomal subunit protein uS3 (213 aa).

Residues 38–106 form the KH type-2 domain; it reads IRKYVKKTLY…EFSIEVNEIR (69 aa).

It belongs to the universal ribosomal protein uS3 family. In terms of assembly, part of the 30S ribosomal subunit. Forms a tight complex with proteins S10 and S14.

In terms of biological role, binds the lower part of the 30S subunit head. Binds mRNA in the 70S ribosome, positioning it for translation. In Oleidesulfovibrio alaskensis (strain ATCC BAA-1058 / DSM 17464 / G20) (Desulfovibrio alaskensis), this protein is Small ribosomal subunit protein uS3.